The following is a 510-amino-acid chain: NAD(P)H-quinone oxidoreductase subunit 2 B, chloroplastic (510 aa).

13 helical membrane passes run 24-44 (LLLF…GLIL), 57-77 (IPWF…ALLF), 99-119 (IFQF…VEYI), 124-144 (MAIT…MFLC), 149-169 (LITI…LSGY), 183-203 (YLLM…WLYG), 227-247 (PGIL…LSLA), 295-315 (WHLL…LIAI), 323-343 (MLAY…IVGD), 354-374 (YMLF…LFGL), 395-415 (ALSL…AGFF), 428-448 (GLYF…YYYL), and 484-504 (MIVC…IIAI).

It belongs to the complex I subunit 2 family. In terms of assembly, NDH is composed of at least 16 different subunits, 5 of which are encoded in the nucleus.

The protein localises to the plastid. Its subcellular location is the chloroplast thylakoid membrane. It carries out the reaction a plastoquinone + NADH + (n+1) H(+)(in) = a plastoquinol + NAD(+) + n H(+)(out). The catalysed reaction is a plastoquinone + NADPH + (n+1) H(+)(in) = a plastoquinol + NADP(+) + n H(+)(out). In terms of biological role, NDH shuttles electrons from NAD(P)H:plastoquinone, via FMN and iron-sulfur (Fe-S) centers, to quinones in the photosynthetic chain and possibly in a chloroplast respiratory chain. The immediate electron acceptor for the enzyme in this species is believed to be plastoquinone. Couples the redox reaction to proton translocation, and thus conserves the redox energy in a proton gradient. The chain is NAD(P)H-quinone oxidoreductase subunit 2 B, chloroplastic from Eucalyptus globulus subsp. globulus (Tasmanian blue gum).